The primary structure comprises 5146 residues: SCO-spondin (5146 aa).

Positions 1–17 are cleaved as a signal peptide; sequence MLLPALLFGAAWALANG. Positions 18-94 constitute an EMI domain; the sequence is RWCEQTETVL…ACCPGWGGTH (77 aa). N-linked (GlcNAc...) asparagine glycans are attached at residues Asn80, Asn122, and Asn153. Residues 185–356 form the VWFD 1 domain; that stretch reads ATCATWSGFH…RLPDSELGCL (172 aa). Cystine bridges form between Cys187/Cys317, Cys209/Cys355, and Cys231/Cys237. The N-linked (GlcNAc...) asparagine glycan is linked to Asn255. The region spanning 464–519 is the TIL 1 domain; it reads CPGGQLYSDCASACPPSCSAVGEGSEWSCGEECVSGCECPPGLFWDGALCVPAARC. The 174-residue stretch at 557–730 folds into the VWFD 2 domain; that stretch reads AECAVGGDGH…FQVAGGGTCS (174 aa). Intrachain disulfides connect Cys559–Cys692 and Cys583–Cys729. Asn814 carries an N-linked (GlcNAc...) asparagine glycan. The region spanning 822-875 is the TIL 2 domain; the sequence is CPGGQEYQECAPACDRNCGEPEDCGELDNCVAGCNCPLGLLWDPEGQCVPPNLC. Residue Asn906 is glycosylated (N-linked (GlcNAc...) asparagine). A VWFD 3 domain is found at 1008–1178; sequence GRCRASGAPH…HSWRLGPLCP (171 aa). Intrachain disulfides connect Cys1010/Cys1142, Cys1032/Cys1177, and Cys1053/Cys1060. The region spanning 1271 to 1327 is the TIL 3 domain; sequence CERGQVYEACGPTCPATCHDHRPEPGWPCRAVACVEGCFCPEGTLLHGGVCLEPAAC. Asn1349 carries an N-linked (GlcNAc...) asparagine glycan. LDL-receptor class A domains follow at residues 1372 to 1409, 1412 to 1447, 1448 to 1484, 1488 to 1526, 1561 to 1597, and 1599 to 1638; these read GCAE…EGCA, VCGE…EQGC, PCPQ…ESCL, DCAP…GHCP, PCGP…SGCD, and PCAP…GACE. Intrachain disulfides connect Cys1373-Cys1386, Cys1380-Cys1399, Cys1393-Cys1408, Cys1413-Cys1425, Cys1420-Cys1438, Cys1432-Cys1447, Cys1449-Cys1461, Cys1456-Cys1474, Cys1468-Cys1483, Cys1489-Cys1501, Cys1496-Cys1514, Cys1508-Cys1525, Cys1562-Cys1574, Cys1569-Cys1587, Cys1581-Cys1596, Cys1600-Cys1613, Cys1607-Cys1626, and Cys1620-Cys1637. N-linked (GlcNAc...) asparagine glycosylation is present at Asn1647. Residues 1652 to 1690 enclose the LDL-receptor class A 7 domain; it reads PCPEYSCPDGLCIGFQQVCDGQPDCELAGTAGPSPEEQG. TSP type-1 domains lie at 1691-1745 and 1747-1805; these read CGAW…AACP and DGVW…DGCP. 3 disulfide bridges follow: Cys1703–Cys1739, Cys1707–Cys1744, and Cys1718–Cys1729. Residue Asn1806 is glycosylated (N-linked (GlcNAc...) asparagine). One can recognise a TIL 4 domain in the interval 1809 to 1865; the sequence is CSGELVFHACVPCPLTCDDISGQATCPPDRPCGGPGCWCPAGQVLGAQGRCVWPRQC. EGF-like domains follow at residues 1821–1860 and 1861–1898; these read CPLT…GRCV and WPRQ…RRCQ. A TSP type-1 3 domain is found at 1906 to 1962; the sequence is NCGWSAWSPWAECLGPCGSRSVQWSFRSPNNPRPAGRGHQCRGLHRKARRCQTEPCE. Intrachain disulfides connect Cys1907/Cys1946, Cys1918/Cys1922, and Cys1956/Cys1961. In terms of domain architecture, VWFC 1 spans 1962–2022; sequence EGCEQDGRVH…GVGESCCHCV (61 aa). N-linked (GlcNAc...) asparagine glycans are attached at residues Asn2027 and Asn2127. 4 cysteine pairs are disulfide-bonded: Cys2062–Cys2220, Cys2226–Cys2238, Cys2233–Cys2251, and Cys2245–Cys2260. The F5/8 type C domain maps to 2062–2220; the sequence is CYSPLGLARL…GPLRVELLGC (159 aa). The LDL-receptor class A 8 domain occupies 2225–2261; it reads LCLGVGHRCVSGECAPRGAPCDGVEDCKDGSDEEGCV. Residues 2262–2346 form a disordered region; it reads TPPAGAGRIE…TPTSQPEAQA (85 aa). 2 stretches are compositionally biased toward polar residues: residues 2273–2284 and 2331–2343; these read TAWSSAPSSAQP and GSVQ…SQPE. LDL-receptor class A domains are found at residues 2382–2418 and 2442–2478; these read QCSP…RPCA and LCSP…NGCV. Cystine bridges form between Cys2383/Cys2395, Cys2390/Cys2408, Cys2402/Cys2417, Cys2443/Cys2455, Cys2450/Cys2468, Cys2462/Cys2477, Cys2480/Cys2516, Cys2491/Cys2495, Cys2526/Cys2531, Cys2546/Cys2583, Cys2550/Cys2588, and Cys2561/Cys2573. 2 TSP type-1 domains span residues 2479–2532 and 2534–2589; these read DCGL…QACP and AGAW…QPCA. One can recognise a TIL 5 domain in the interval 2611 to 2654; the sequence is VPPCPPSCLDPEANRSCSGLCLEGCRCPPGLLLQDAGCLPLSEC. N-linked (GlcNAc...) asparagine glycans are attached at residues Asn2624 and Asn2673. TSP type-1 domains lie at 2694–2748, 2751–2807, and 2809–2862; these read PCGW…SACG, VPGW…PVCL, and LGVW…QPCT. 9 disulfide bridges follow: Cys2695-Cys2733, Cys2706-Cys2710, Cys2743-Cys2747, Cys2763-Cys2801, Cys2767-Cys2806, Cys2783-Cys2791, Cys2821-Cys2856, Cys2825-Cys2861, and Cys2836-Cys2846. N-linked (GlcNAc...) asparagine glycosylation is found at Asn2915 and Asn2946. TSP type-1 domains lie at 2964 to 3019 and 3020 to 3071; these read ACGW…RPCG and GPAG…GVCP. 3 cysteine pairs are disulfide-bonded: Cys2965–Cys3003, Cys2976–Cys2980, and Cys3013–Cys3018. Residue Asn3041 is glycosylated (N-linked (GlcNAc...) asparagine). One can recognise a TIL 6 domain in the interval 3070–3122; sequence CPPGKRWLDCAQGPASCAELSAPRGADQPCHPGCYCPSGMLLLNNACVPTQDC. N-linked (GlcNAc...) asparagine glycans are attached at residues Asn3143 and Asn3153. TSP type-1 domains follow at residues 3163–3230 and 3232–3287; these read QPTW…PECD and AGGW…LPCP. 6 disulfides stabilise this stretch: Cys3175-Cys3224, Cys3179-Cys3229, Cys3190-Cys3214, Cys3244-Cys3281, Cys3248-Cys3286, and Cys3259-Cys3271. A glycan (N-linked (GlcNAc...) asparagine) is linked at Asn3290. The region spanning 3295–3345 is the TIL 7 domain; sequence EGAEYSACGPPCPRSCDDLVHCVWHCQPGCYCPPGQVLSADGTVHVQPGHC. TSP type-1 domains are found at residues 3388 to 3450 and 3452 to 3507; these read PGAW…PECP and DGAW…TQCT. Disulfide bonds link Cys3400–Cys3443, Cys3404–Cys3449, Cys3415–Cys3427, Cys3464–Cys3499, Cys3467–Cys3506, and Cys3477–Cys3489. 3 N-linked (GlcNAc...) asparagine glycosylation sites follow: Asn3502, Asn3580, and Asn3607. Positions 3626–3674 constitute a TSP type-1 15 domain; that stretch reads LGLWGSWGPWEDCSVSCGGGEQLRFRRCPRPPCPGPARQSRTCRTQVCR. Cystine bridges form between Cys3638-Cys3668, Cys3642-Cys3673, and Cys3653-Cys3658. An N-linked (GlcNAc...) asparagine glycan is attached at Asn3783. 4 consecutive TSP type-1 domains span residues 3802–3858, 3872–3924, 3938–3994, and 3996–4051; these read AGGF…PECP, PGGW…PSCT, NCSW…RACP, and PGGW…TPCE. Cystine bridges form between Cys3814/Cys3852, Cys3818/Cys3857, and Cys3830/Cys3842. Residues Asn3906 and Asn3938 are each glycosylated (N-linked (GlcNAc...) asparagine). 6 disulfide bridges follow: Cys3939/Cys3975, Cys3950/Cys3954, Cys3988/Cys3993, Cys4008/Cys4045, Cys4012/Cys4050, and Cys4023/Cys4035. The TIL 8 domain occupies 4054–4109; the sequence is CPAGMEVVSCANRCPRRCSDLQEGIVCQEDQACQQGCRCPEGSLEQDGGCVPLGHC. Positions 4101 to 4168 constitute a VWFC 2 domain; the sequence is GGCVPLGHCE…AWSPCSRSCG (68 aa). Residue Asn4131 is glycosylated (N-linked (GlcNAc...) asparagine). 4 TSP type-1 domains span residues 4151–4204, 4245–4300, 4302–4358, and 4360–4414; these read HCAW…SPCP, LGAW…WPCP, LPDT…GPCL, and ECVW…GNCS. 6 disulfides stabilise this stretch: Cys4152–Cys4188, Cys4163–Cys4167, Cys4198–Cys4203, Cys4257–Cys4294, Cys4261–Cys4299, and Cys4272–Cys4284. An N-linked (GlcNAc...) asparagine glycan is attached at Asn4341. 3 disulfide bridges follow: Cys4361–Cys4398, Cys4372–Cys4374, and Cys4408–Cys4413. Asn4412 carries N-linked (GlcNAc...) asparagine glycosylation. The TIL 9 domain maps to 4418–4473; it reads CAPPFEFQACGSPCTGLCATYLSPWLCQDLPPCQPGCYCPEGLLEQAGGCVPPEQC. Residues 4610 to 4661 form the TSP type-1 24 domain; it reads LCQWGPWGAWSPCQVPCSGGFRLRWREAGIPPGGGCRGPWAQTESCNMGPCP. 3 disulfides stabilise this stretch: Cys4611–Cys4645, Cys4622–Cys4626, and Cys4655–Cys4660. The TIL 10 domain occupies 4675–4721; the sequence is DCANQCPRSCVDLWDRVECLQGPCRPGCRCPPGQLVQDGHCVPVSSC. Residues Asn4729, Asn4746, Asn4751, and Asn4772 are each glycosylated (N-linked (GlcNAc...) asparagine). In terms of domain architecture, TSP type-1 25 spans 4761–4814; that stretch reads CPTLGPWSAWSNCSAPCGGGTTKRHRSCKEGPGVTPCQAQDMEQQQDCNLQPCP. 3 disulfides stabilise this stretch: Cys4773/Cys4808, Cys4777/Cys4813, and Cys4788/Cys4797. Positions 4816–4870 constitute a TIL 11 domain; the sequence is CPPGQVLSACAVSCPRLCSHLQPGTPCMQEPCQLGCDCPRGQLLHNGTCVPPAEC. N-linked (GlcNAc...) asparagine glycosylation is found at Asn4861, Asn4901, Asn4947, and Asn4954. Positions 4983–5041 constitute a VWFC 3 domain; that stretch reads CECWHHGRPHPPGSEWQKACESCRCVSGESICTQHCPPLTCAQGETAVQEPGGCCPTCR. Intrachain disulfides connect Cys5052–Cys5100, Cys5066–Cys5117, Cys5076–Cys5133, and Cys5080–Cys5135. Positions 5052-5139 constitute a CTCK domain; that stretch reads CRHLTELRNL…IHSCQCSACQ (88 aa). N-linked (GlcNAc...) asparagine glycosylation occurs at Asn5060.

This sequence belongs to the thrombospondin family. In terms of tissue distribution, subcommissural organ. Located at the boundary of the diencephalon and mesencephalon beneath the posterior commissure at the point where the axons cross the midline.

The protein localises to the secreted. It is found in the extracellular space. Involved in the modulation of neuronal aggregation. May be involved in developmental events during the formation of the central nervous system. The sequence is that of SCO-spondin (SSPO) from Bos taurus (Bovine).